An 89-amino-acid polypeptide reads, in one-letter code: Small ribosomal subunit protein uS15 (89 aa).

The protein belongs to the universal ribosomal protein uS15 family. As to quaternary structure, part of the 30S ribosomal subunit. Forms a bridge to the 50S subunit in the 70S ribosome, contacting the 23S rRNA.

Functionally, one of the primary rRNA binding proteins, it binds directly to 16S rRNA where it helps nucleate assembly of the platform of the 30S subunit by binding and bridging several RNA helices of the 16S rRNA. Forms an intersubunit bridge (bridge B4) with the 23S rRNA of the 50S subunit in the ribosome. This Shewanella amazonensis (strain ATCC BAA-1098 / SB2B) protein is Small ribosomal subunit protein uS15.